The following is a 173-amino-acid chain: Putative metal-dependent hydrolase BT9727_2476 (173 aa).

Zn(2+) contacts are provided by His-65, His-156, and His-160.

The protein belongs to the metal hydrolase YfiT family. As to quaternary structure, homodimer. Zn(2+) serves as cofactor.

The protein localises to the cytoplasm. Functionally, possible metal-dependent hydrolase. The chain is Putative metal-dependent hydrolase BT9727_2476 from Bacillus thuringiensis subsp. konkukian (strain 97-27).